Here is a 34-residue protein sequence, read N- to C-terminus: Cytochrome c oxidase subunit 6B (34 aa).

This sequence belongs to the cytochrome c oxidase subunit 6B family. In terms of assembly, component of the cytochrome c oxidase (complex IV, CIV), a multisubunit enzyme composed of 14 subunits. The complex is composed of a catalytic core of 3 subunits MT-CO1, MT-CO2 and MT-CO3, encoded in the mitochondrial DNA, and 11 supernumerary subunits COX4I, COX5A, COX5B, COX6A, COX6B, COX6C, COX7A, COX7B, COX7C, COX8 and NDUFA4, which are encoded in the nuclear genome. The complex exists as a monomer or a dimer and forms supercomplexes (SCs) in the inner mitochondrial membrane with NADH-ubiquinone oxidoreductase (complex I, CI) and ubiquinol-cytochrome c oxidoreductase (cytochrome b-c1 complex, complex III, CIII), resulting in different assemblies (supercomplex SCI(1)III(2)IV(1) and megacomplex MCI(2)III(2)IV(2)). Post-translationally, the N-terminus is blocked.

It localises to the mitochondrion inner membrane. It participates in energy metabolism; oxidative phosphorylation. In terms of biological role, component of the cytochrome c oxidase, the last enzyme in the mitochondrial electron transport chain which drives oxidative phosphorylation. The respiratory chain contains 3 multisubunit complexes succinate dehydrogenase (complex II, CII), ubiquinol-cytochrome c oxidoreductase (cytochrome b-c1 complex, complex III, CIII) and cytochrome c oxidase (complex IV, CIV), that cooperate to transfer electrons derived from NADH and succinate to molecular oxygen, creating an electrochemical gradient over the inner membrane that drives transmembrane transport and the ATP synthase. Cytochrome c oxidase is the component of the respiratory chain that catalyzes the reduction of oxygen to water. Electrons originating from reduced cytochrome c in the intermembrane space (IMS) are transferred via the dinuclear copper A center (CU(A)) of subunit 2 and heme A of subunit 1 to the active site in subunit 1, a binuclear center (BNC) formed by heme A3 and copper B (CU(B)). The BNC reduces molecular oxygen to 2 water molecules using 4 electrons from cytochrome c in the IMS and 4 protons from the mitochondrial matrix. The sequence is that of Cytochrome c oxidase subunit 6B from Thunnus obesus (Bigeye tuna).